A 176-amino-acid chain; its full sequence is Warthog protein 5 (176 aa).

An N-terminal signal peptide occupies residues 1 to 21 (MCSMWLMASWLMAFVAGSTLA). Asn-70 carries an N-linked (GlcNAc...) asparagine glycan.

Expressed in seam cells, excretory cell, reproductive system, pharynx, pharyngeal-intestinal valve cells, neurons and neuronal support cells.

The protein resides in the secreted. Its function is as follows. Intercellular signal essential for a variety of patterning events during development. This is Warthog protein 5 (wrt-5) from Caenorhabditis elegans.